The following is a 60-amino-acid chain: Large ribosomal subunit protein bL32 (60 aa).

The protein belongs to the bacterial ribosomal protein bL32 family.

The polypeptide is Large ribosomal subunit protein bL32 (Hydrogenobaculum sp. (strain Y04AAS1)).